We begin with the raw amino-acid sequence, 268 residues long: MQQLNKTLIRQRFGRQLHGYNRHAFIQKKMAGHLADMVSASLASSEVGRLFEIGVGSAALTDALLHRLRIDRYYANDLVPQCRQMVETVTALHGVDSAEFLDGDIEALREIPGDLDVIVSGATVQWLEDLPGFFHRMAGALKPGGVLAFSTFGHDNMQEIRALESVGLHYHTLAEMQAMAGELYEVTGMEEERHQLDFTGPEAVLRHISRTGVNGLDGRAWTKSRHRAFIDRYRRAFSSGDGVRLTYHTMYCCFRKCPASAGVEATCC.

Belongs to the methyltransferase superfamily.

The catalysed reaction is malonyl-[ACP] + S-adenosyl-L-methionine = malonyl-[ACP] methyl ester + S-adenosyl-L-homocysteine. It participates in cofactor biosynthesis; biotin biosynthesis. Converts the free carboxyl group of a malonyl-thioester to its methyl ester by transfer of a methyl group from S-adenosyl-L-methionine (SAM). It allows to synthesize pimeloyl-ACP via the fatty acid synthetic pathway. This is Malonyl-[acyl-carrier protein] O-methyltransferase from Prosthecochloris aestuarii (strain DSM 271 / SK 413).